We begin with the raw amino-acid sequence, 201 residues long: 3-isopropylmalate dehydratase small subunit (201 aa).

This sequence belongs to the LeuD family. LeuD type 1 subfamily. In terms of assembly, heterodimer of LeuC and LeuD.

The enzyme catalyses (2R,3S)-3-isopropylmalate = (2S)-2-isopropylmalate. It participates in amino-acid biosynthesis; L-leucine biosynthesis; L-leucine from 3-methyl-2-oxobutanoate: step 2/4. Its function is as follows. Catalyzes the isomerization between 2-isopropylmalate and 3-isopropylmalate, via the formation of 2-isopropylmaleate. This chain is 3-isopropylmalate dehydratase small subunit, found in Methylorubrum populi (strain ATCC BAA-705 / NCIMB 13946 / BJ001) (Methylobacterium populi).